The following is an 87-amino-acid chain: Translation initiation factor IF-1 (87 aa).

Residues 16-87 (LSKEDVIEME…TKGRISYRHK (72 aa)) form the S1-like domain.

It belongs to the IF-1 family. In terms of assembly, component of the 30S ribosomal translation pre-initiation complex which assembles on the 30S ribosome in the order IF-2 and IF-3, IF-1 and N-formylmethionyl-tRNA(fMet); mRNA recruitment can occur at any time during PIC assembly.

The protein resides in the cytoplasm. Functionally, one of the essential components for the initiation of protein synthesis. Stabilizes the binding of IF-2 and IF-3 on the 30S subunit to which N-formylmethionyl-tRNA(fMet) subsequently binds. Helps modulate mRNA selection, yielding the 30S pre-initiation complex (PIC). Upon addition of the 50S ribosomal subunit IF-1, IF-2 and IF-3 are released leaving the mature 70S translation initiation complex. The polypeptide is Translation initiation factor IF-1 (Magnetococcus marinus (strain ATCC BAA-1437 / JCM 17883 / MC-1)).